The following is a 131-amino-acid chain: Norrin (131 aa).

The first 24 residues, 1 to 24 (MRNHVLAASISMLSLLAIMGDTDS), serve as a signal peptide directing secretion. Intrachain disulfides connect Cys37/Cys94, Cys53/Cys108, Cys63/Cys124, and Cys67/Cys126. Residues 37–130 (CMRHHYVDSI…ILSCHCEECS (94 aa)) enclose the CTCK domain.

In terms of assembly, homodimer; disulfide-linked. Component of a complex, at least composed of TSPAN12, FZD4, LRP5/6 and norrin (NDP). Binds FZD4 with high affinity. Interacts with LRP6 (via Beta-propellers 1 and 2). As to expression, expressed in the outer nuclear, inner nuclear and ganglion cell layers of the retina.

The protein localises to the secreted. Activates the canonical Wnt signaling pathway through FZD4 and LRP5 coreceptor. Plays a central role in retinal vascularization by acting as a ligand for FZD4 that signals via stabilizing beta-catenin (CTNNB1) and activating LEF/TCF-mediated transcriptional programs. Acts in concert with TSPAN12 to activate FZD4 independently of the Wnt-dependent activation of FZD4, suggesting the existence of a Wnt-independent signaling that also promote accumulation the beta-catenin (CTNNB1). May be involved in a pathway that regulates neural cell differentiation and proliferation. Possible role in neuroectodermal cell-cell interaction. The protein is Norrin (Ndp) of Mus musculus (Mouse).